The primary structure comprises 191 residues: Protein GrpE (191 aa).

Positions 1–11 are enriched in basic and acidic residues; sequence MTDSSNAHEAE. 2 disordered regions span residues 1–22 and 172–191; these read MTDS…DNEI and KVSK…NNNE.

The protein belongs to the GrpE family. In terms of assembly, homodimer.

It is found in the cytoplasm. Participates actively in the response to hyperosmotic and heat shock by preventing the aggregation of stress-denatured proteins, in association with DnaK and GrpE. It is the nucleotide exchange factor for DnaK and may function as a thermosensor. Unfolded proteins bind initially to DnaJ; upon interaction with the DnaJ-bound protein, DnaK hydrolyzes its bound ATP, resulting in the formation of a stable complex. GrpE releases ADP from DnaK; ATP binding to DnaK triggers the release of the substrate protein, thus completing the reaction cycle. Several rounds of ATP-dependent interactions between DnaJ, DnaK and GrpE are required for fully efficient folding. The chain is Protein GrpE from Chlamydia abortus (strain DSM 27085 / S26/3) (Chlamydophila abortus).